A 330-amino-acid polypeptide reads, in one-letter code: Clavaminate synthase-like protein At3g21360 (330 aa).

The residue at position 2 (Ala2) is an N-acetylalanine. Fe cation is bound by residues His120, Glu122, and His313.

Requires Fe cation as cofactor.

The protein is Clavaminate synthase-like protein At3g21360 of Arabidopsis thaliana (Mouse-ear cress).